Reading from the N-terminus, the 84-residue chain is RNA-binding protein Hfq (84 aa).

One can recognise a Sm domain in the interval 10 to 69; sequence EPFLNTLRREHVPVSIYLVNGIKLQGQIESFDQYVVLLRNTVTQMVFKHAISTIVPGRAV.

The protein belongs to the Hfq family. Homohexamer.

Its function is as follows. RNA chaperone that binds small regulatory RNA (sRNAs) and mRNAs to facilitate mRNA translational regulation in response to envelope stress, environmental stress and changes in metabolite concentrations. Also binds with high specificity to tRNAs. The polypeptide is RNA-binding protein Hfq (Verminephrobacter eiseniae (strain EF01-2)).